The sequence spans 251 residues: Probable transcriptional regulatory protein CC_3243 (251 aa).

The protein belongs to the TACO1 family.

It is found in the cytoplasm. This chain is Probable transcriptional regulatory protein CC_3243, found in Caulobacter vibrioides (strain ATCC 19089 / CIP 103742 / CB 15) (Caulobacter crescentus).